We begin with the raw amino-acid sequence, 170 residues long: AP-5 complex subunit sigma-1 (170 aa).

As to quaternary structure, probably part of the adaptor protein complex 5 (AP-5) a tetramer composed of AP5B1, AP5M1, AP5S1 and AP5Z1. Interacts with ZFYVE26 and SPG11.

Its subcellular location is the cytoplasm. It is found in the cytosol. The protein localises to the late endosome membrane. The protein resides in the lysosome membrane. In terms of biological role, as part of AP-5, a probable fifth adaptor protein complex it may be involved in endosomal transport. The chain is AP-5 complex subunit sigma-1 (Ap5s1) from Mus musculus (Mouse).